A 190-amino-acid chain; its full sequence is Large ribosomal subunit protein uL5 (190 aa).

It belongs to the universal ribosomal protein uL5 family. Part of the 50S ribosomal subunit; contacts the 5S rRNA and probably tRNA. Forms a bridge to the 30S subunit in the 70S ribosome.

Functionally, this is one of the proteins that bind and probably mediate the attachment of the 5S RNA into the large ribosomal subunit, where it forms part of the central protuberance. In the 70S ribosome it contacts protein S13 of the 30S subunit (bridge B1b), connecting the 2 subunits; this bridge is implicated in subunit movement. May contact the P site tRNA; the 5S rRNA and some of its associated proteins might help stabilize positioning of ribosome-bound tRNAs. This is Large ribosomal subunit protein uL5 from Methanocaldococcus jannaschii (strain ATCC 43067 / DSM 2661 / JAL-1 / JCM 10045 / NBRC 100440) (Methanococcus jannaschii).